The sequence spans 437 residues: UDP-glucuronate 4-epimerase 4 (437 aa).

The chain crosses the membrane as a helical span at residues 30-50 (SLTKFAFFSFFLLCLISLLFL). Residues 56 to 76 (INPSSPSDPSRRSLRTNTYGG) form a disordered region. A helical transmembrane segment spans residues 96–116 (GITVLVTGAAGFVGTHVSAAL). 98-129 (TVLVTGAAGFVGTHVSAALKRRGDGVIGLDNF) is an NAD(+) binding site. Y248 serves as the catalytic Proton acceptor.

This sequence belongs to the NAD(P)-dependent epimerase/dehydratase family. Homodimer. As to expression, in roots, leaves, siliques, flowers, pollen and stems.

The protein resides in the golgi apparatus. Its subcellular location is the golgi stack membrane. The enzyme catalyses UDP-alpha-D-glucuronate = UDP-alpha-D-galacturonate. With respect to regulation, activated by glycerol, not effected by dimethyl sulfoxide and inhibited by high concentration of monovalent salts, UDP-xylose, UDP-arabinose or UDP. Its function is as follows. Involved in the synthesis of the negatively charged monosaccharide that forms the backbone of pectic cell wall components. The polypeptide is UDP-glucuronate 4-epimerase 4 (GAE4) (Arabidopsis thaliana (Mouse-ear cress)).